The primary structure comprises 500 residues: Glycerol-3-phosphate acyltransferase 7 (500 aa).

Helical transmembrane passes span 38 to 58 (GLIR…LDVL) and 235 to 255 (ALII…RIFV). The HXXXXD motif motif lies at 298 to 303 (HRTLMD).

Belongs to the GPAT/DAPAT family. In terms of tissue distribution, weakly or not expressed in roots, leaves, seedlings, developing siliques and flower buds.

The protein localises to the membrane. It catalyses the reaction sn-glycerol 3-phosphate + an acyl-CoA = a 1-acyl-sn-glycero-3-phosphate + CoA. Its pathway is phospholipid metabolism; CDP-diacylglycerol biosynthesis; CDP-diacylglycerol from sn-glycerol 3-phosphate: step 1/3. Its function is as follows. Esterifies acyl-group from acyl-ACP to the sn-1 position of glycerol-3-phosphate, an essential step in glycerolipid biosynthesis. The polypeptide is Glycerol-3-phosphate acyltransferase 7 (GPAT7) (Arabidopsis thaliana (Mouse-ear cress)).